The sequence spans 321 residues: Ferredoxin--NADP reductase (321 aa).

Residues aspartate 34, glutamine 42, tyrosine 47, valine 87, phenylalanine 119, aspartate 278, and threonine 319 each contribute to the FAD site.

This sequence belongs to the ferredoxin--NADP reductase type 2 family. In terms of assembly, homodimer. Requires FAD as cofactor.

It catalyses the reaction 2 reduced [2Fe-2S]-[ferredoxin] + NADP(+) + H(+) = 2 oxidized [2Fe-2S]-[ferredoxin] + NADPH. The sequence is that of Ferredoxin--NADP reductase from Streptococcus pneumoniae serotype 4 (strain ATCC BAA-334 / TIGR4).